Here is a 319-residue protein sequence, read N- to C-terminus: Exopolyphosphatase 2 (319 aa).

Belongs to the GppA/Ppx family. In terms of assembly, homodimer.

The enzyme catalyses [phosphate](n) + H2O = [phosphate](n-1) + phosphate + H(+). With respect to regulation, exopolyphosphatase activity is inhibited by ppGpp alarmones produced during the bacterial stringent response. Degradation of inorganic polyphosphates (polyP). Releases orthophosphate processively from the ends of the polyP chain. Prefers long-chain length polyphosphates as substrates. This chain is Exopolyphosphatase 2, found in Mycobacterium tuberculosis (strain CDC 1551 / Oshkosh).